The following is a 265-amino-acid chain: Regulator of calcineurin 2 (265 aa).

Ser104 and Ser110 each carry phosphoserine. 2 disordered regions span residues 127–213 (LLSI…DKSA) and 242–265 (ENDV…EFFH). A Phosphothreonine modification is found at Thr132. 2 stretches are compositionally biased toward low complexity: residues 141 to 161 (SSSL…LESP) and 182 to 202 (LSRS…QTSL). Ser152, Ser157, Ser160, Ser183, Ser187, Ser193, Ser201, and Ser255 each carry phosphoserine.

Phosphorylation of Ser-152 and Ser-160 is induced 2-fold in response to mating pheromone.

It is found in the cytoplasm. This chain is Regulator of calcineurin 2 (RCN2), found in Saccharomyces cerevisiae (strain ATCC 204508 / S288c) (Baker's yeast).